The primary structure comprises 248 residues: Mannose-binding protein C (248 aa).

The N-terminal stretch at 1–20 (MSLIPSLSLLLMSMVAASYS) is a signal peptide. The Collagen-like domain occupies 42-99 (GINGFPGKDGRDGTKGEKGEPGQGLRGLQGPPGKLGPPGNPGPSGSPGPKGQKGDPGK). A disordered region spans residues 43–107 (INGFPGKDGR…GKSPDCDSSL (65 aa)). P47 is subject to 4-hydroxyproline. Basic and acidic residues predominate over residues 49–61 (KDGRDGTKGEKGE). A 4-hydroxyproline mark is found at P73, P79, P82, and P88. A compositionally biased stretch (pro residues) spans 75–87 (KLGPPGNPGPSGS). Basic and acidic residues predominate over residues 93–102 (QKGDPGKSPD). Positions 112 to 130 (RKALQTEMARIKKWLTFSL) form a coiled coil. Residues 134–245 (VGNKFFLTNG…CSSSHLAVCE (112 aa)) enclose the C-type lectin domain. 2 disulfide bridges follow: C155–C244 and C222–C236.

As to quaternary structure, oligomeric complex of 3 or more homotrimers. Interacts with MASP1 and MASP2. Interacts with MEP1A and MEP1B and may inhibit their catalytic activity. Post-translationally, hydroxylation on proline residues within the sequence motif, GXPG, is most likely to be 4-hydroxy as this fits the requirement for 4-hydroxylation in vertebrates.

It localises to the secreted. In terms of biological role, calcium-dependent lectin involved in innate immune defense. Binds mannose, fucose and N-acetylglucosamine on different microorganisms and activates the lectin complement pathway. Binds to late apoptotic cells, as well as to apoptotic blebs and to necrotic cells, but not to early apoptotic cells, facilitating their uptake by macrophages. The polypeptide is Mannose-binding protein C (MBL2) (Hylobates lar (Lar gibbon)).